We begin with the raw amino-acid sequence, 836 residues long: Ethylene receptor 3 (836 aa).

A run of 3 helical transmembrane segments spans residues 137–157 (LIAAAYFSIPLEILYFVAGLR), 166–186 (LVQFGAFIVLCGLTHLLTAFT), and 204–224 (LTALVSFLTAITLLTLIPQLL). Positions 176 and 180 each coordinate Cu cation. The GAF domain maps to 269–413 (DRHTVLYTTL…VVAGQVAVAL (145 aa)). A coiled-coil region spans residues 416–452 (ATLLEESRAMRDRLAEQNRELLQARRDALMANEARQA). A Histidine kinase domain is found at 457 to 691 (MSQGMRRPIH…LVLRFQLQSP (235 aa)). In terms of domain architecture, Response regulatory spans 718-834 (LLIDDDDDIN…LKDELARILQ (117 aa)).

This sequence belongs to the ethylene receptor family. Cu cation is required as a cofactor.

It is found in the endoplasmic reticulum membrane. It catalyses the reaction ATP + protein L-histidine = ADP + protein N-phospho-L-histidine.. Ethylene receptor related to bacterial two-component regulators. Acts as a negative regulator of ethylene signaling. May delay the transition from the vegetative stage to the floral stage by up-regulating GI (GIGANTEA) and RCN1 and cause starch accumulation in stems by down-regulating the alpha-amylase AMY3D. This Oryza sativa subsp. indica (Rice) protein is Ethylene receptor 3.